The following is a 345-amino-acid chain: Flap endonuclease 1 (345 aa).

The tract at residues 1–103 is N-domain; the sequence is MGIKQLSKLL…KELEKRKERR (103 aa). Position 34 (Asp34) interacts with Mg(2+). Residues Arg47 and Arg69 each contribute to the DNA site. Mg(2+)-binding residues include Asp85, Glu157, Glu159, Asp178, and Asp180. Residues 121 to 252 are I-domain; that stretch reads LMEMYDKRKT…KKALGLIKKH (132 aa). Glu157 contributes to the DNA binding site. Gly230 and Asp232 together coordinate DNA. Asp232 is a Mg(2+) binding site. The interval 333-341 is interaction with PCNA; that stretch reads TQGRLDCFI.

Belongs to the XPG/RAD2 endonuclease family. FEN1 subfamily. Interacts with PCNA. Three molecules of FEN1 bind to one PCNA trimer with each molecule binding to one PCNA monomer. PCNA stimulates the nuclease activity without altering cleavage specificity. Mg(2+) is required as a cofactor. Phosphorylated. Phosphorylation upon DNA damage induces relocalization to the nuclear plasma.

It localises to the nucleus. The protein resides in the nucleolus. It is found in the nucleoplasm. Its subcellular location is the mitochondrion. Structure-specific nuclease with 5'-flap endonuclease and 5'-3' exonuclease activities involved in DNA replication and repair. During DNA replication, cleaves the 5'-overhanging flap structure that is generated by displacement synthesis when DNA polymerase encounters the 5'-end of a downstream Okazaki fragment. It enters the flap from the 5'-end and then tracks to cleave the flap base, leaving a nick for ligation. Also involved in the long patch base excision repair (LP-BER) pathway, by cleaving within the apurinic/apyrimidinic (AP) site-terminated flap. Acts as a genome stabilization factor that prevents flaps from equilibrating into structures that lead to duplications and deletions. Also possesses 5'-3' exonuclease activity on nicked or gapped double-stranded DNA, and exhibits RNase H activity. Also involved in replication and repair of rDNA and in repairing mitochondrial DNA. This is Flap endonuclease 1 from Encephalitozoon cuniculi (strain GB-M1) (Microsporidian parasite).